The sequence spans 306 residues: tRNA dimethylallyltransferase (306 aa).

Residue 9–16 participates in ATP binding; it reads GPTGIGKT. 11–16 is a binding site for substrate; the sequence is TGIGKT. Residues 34–37 are interaction with substrate tRNA; it reads DSMQ.

The protein belongs to the IPP transferase family. Monomer. Requires Mg(2+) as cofactor.

It catalyses the reaction adenosine(37) in tRNA + dimethylallyl diphosphate = N(6)-dimethylallyladenosine(37) in tRNA + diphosphate. In terms of biological role, catalyzes the transfer of a dimethylallyl group onto the adenine at position 37 in tRNAs that read codons beginning with uridine, leading to the formation of N6-(dimethylallyl)adenosine (i(6)A). This chain is tRNA dimethylallyltransferase, found in Lactobacillus johnsonii (strain CNCM I-12250 / La1 / NCC 533).